Here is a 158-residue protein sequence, read N- to C-terminus: UPF0260 protein RHECIAT_CH0001358 (158 aa).

The protein belongs to the UPF0260 family.

The sequence is that of UPF0260 protein RHECIAT_CH0001358 from Rhizobium etli (strain CIAT 652).